We begin with the raw amino-acid sequence, 186 residues long: dTTP/UTP pyrophosphatase (186 aa).

Aspartate 70 acts as the Proton acceptor in catalysis.

The protein belongs to the Maf family. YhdE subfamily. A divalent metal cation serves as cofactor.

It is found in the cytoplasm. It carries out the reaction dTTP + H2O = dTMP + diphosphate + H(+). The catalysed reaction is UTP + H2O = UMP + diphosphate + H(+). In terms of biological role, nucleoside triphosphate pyrophosphatase that hydrolyzes dTTP and UTP. May have a dual role in cell division arrest and in preventing the incorporation of modified nucleotides into cellular nucleic acids. This is dTTP/UTP pyrophosphatase from Vibrio vulnificus (strain CMCP6).